Consider the following 134-residue polypeptide: 6,7-dimethyl-8-ribityllumazine synthase (134 aa).

Residues F12, 44–46, and 68–70 each bind 5-amino-6-(D-ribitylamino)uracil; these read VFD and SVI. 73 to 74 lines the (2S)-2-hydroxy-3-oxobutyl phosphate pocket; that stretch reads ET. H76 (proton donor) is an active-site residue. L101 is a 5-amino-6-(D-ribitylamino)uracil binding site. R116 serves as a coordination point for (2S)-2-hydroxy-3-oxobutyl phosphate.

The protein belongs to the DMRL synthase family.

It carries out the reaction (2S)-2-hydroxy-3-oxobutyl phosphate + 5-amino-6-(D-ribitylamino)uracil = 6,7-dimethyl-8-(1-D-ribityl)lumazine + phosphate + 2 H2O + H(+). Its pathway is cofactor biosynthesis; riboflavin biosynthesis; riboflavin from 2-hydroxy-3-oxobutyl phosphate and 5-amino-6-(D-ribitylamino)uracil: step 1/2. Functionally, catalyzes the formation of 6,7-dimethyl-8-ribityllumazine by condensation of 5-amino-6-(D-ribitylamino)uracil with 3,4-dihydroxy-2-butanone 4-phosphate. This is the penultimate step in the biosynthesis of riboflavin. This Methanosarcina mazei (strain ATCC BAA-159 / DSM 3647 / Goe1 / Go1 / JCM 11833 / OCM 88) (Methanosarcina frisia) protein is 6,7-dimethyl-8-ribityllumazine synthase.